The chain runs to 1071 residues: DNA-directed RNA polymerase subunit beta (1071 aa).

Belongs to the RNA polymerase beta chain family. As to quaternary structure, in plastids the minimal PEP RNA polymerase catalytic core is composed of four subunits: alpha, beta, beta', and beta''. When a (nuclear-encoded) sigma factor is associated with the core the holoenzyme is formed, which can initiate transcription.

The protein resides in the plastid. Its subcellular location is the chloroplast. It carries out the reaction RNA(n) + a ribonucleoside 5'-triphosphate = RNA(n+1) + diphosphate. DNA-dependent RNA polymerase catalyzes the transcription of DNA into RNA using the four ribonucleoside triphosphates as substrates. This Adiantum capillus-veneris (Maidenhair fern) protein is DNA-directed RNA polymerase subunit beta.